The following is a 1607-amino-acid chain: Putative molluscan insulin-related peptide(s) receptor (1607 aa).

The first 35 residues, 1 to 35, serve as a signal peptide directing secretion; sequence MHPGSISFNMIINKCIPICLFILFIMMMEFTVSKA. N-linked (GlcNAc...) asparagine glycosylation is found at asparagine 82, asparagine 188, asparagine 245, asparagine 275, asparagine 332, asparagine 343, asparagine 495, asparagine 520, asparagine 663, asparagine 710, asparagine 778, asparagine 796, asparagine 802, asparagine 868, asparagine 879, asparagine 940, and asparagine 953. Fibronectin type-III domains lie at 517-632, 636-726, and 756-861; these read HDLN…TYPF, EPTD…SKEE, and LPDE…TKDS. Over 698–975 the chain is Extracellular; the sequence is EKVKIEEEGK…RPPDPESSNT (278 aa). Residues 870-967 form the Fibronectin type-III 4 domain; that stretch reads TTVDTEIETN…LERFFIVPRP (98 aa). The helical transmembrane segment at 976–996 threads the bilayer; sequence LLIVAIVLAFFGVLTVSLIVA. Residues 997-1607 are Cytoplasmic-facing; it reads CVYYKQKIRS…WSTLKMVLVL (611 aa). The Protein kinase domain maps to 1037–1308; it reads IKLIKELGQG…AIIEYLLPKL (272 aa). Residues 1043-1051 and lysine 1072 each bind ATP; that span reads LGQGSFGMV. Aspartate 1173 acts as the Proton acceptor in catalysis. Phosphotyrosine; by autocatalysis is present on tyrosine 1199. Disordered stretches follow at residues 1328-1352 and 1501-1539; these read GAGE…LSCE and TLNG…SSSW. Over residues 1503-1515 the composition is skewed to polar residues; it reads NGNQSSHNNNSFE. The segment covering 1524-1538 has biased composition (low complexity); sequence SGPASESSNGVSSSS.

Belongs to the protein kinase superfamily. Tyr protein kinase family. Insulin receptor subfamily. As to quaternary structure, probable tetramer of 2 alpha and 2 beta chains linked by disulfide bonds. The alpha chains contribute to the formation of the ligand-binding domain, while the beta chains carry the kinase domain. The cofactor is Mn(2+).

It is found in the membrane. It carries out the reaction L-tyrosyl-[protein] + ATP = O-phospho-L-tyrosyl-[protein] + ADP + H(+). This receptor probably binds to the four different molluscan insulin-related peptides and has a tyrosine-protein kinase activity. This chain is Putative molluscan insulin-related peptide(s) receptor, found in Lymnaea stagnalis (Great pond snail).